Reading from the N-terminus, the 190-residue chain is Vacuolar protein sorting-associated protein 29 (190 aa).

The protein belongs to the VPS29 family. As to quaternary structure, component of the retromer complex which consists of VPS29 (MAG1), VPS26 (VPS26A or VPS26B), VPS35 (VPS35A or VPS35B or VPS35C), VPS5/17 (SNX1 or SNX2A or SNX2B). Component of a retromer subcomplex consisting of VPS29 (MAG1), VPS26 (VPS26A or VPS26B), VPS35 (VPS35A or VPS35B or VPS35C).

Its subcellular location is the cytoplasm. The protein resides in the endosome membrane. It localises to the prevacuolar compartment membrane. It is found in the golgi apparatus. The protein localises to the trans-Golgi network membrane. Its subcellular location is the late endosome membrane. Functionally, plays a role in vesicular protein sorting. Component of the membrane-associated retromer complex which is essential in endosome-to-Golgi retrograde transport. Required for the auxin-carrier protein PIN2 sorting to the lytic vacuolar pathway and the PIN1 recycling to the plasma membrane, thus influencing auxin transport orientation. Also involved in the efficient sorting of seed storage proteins globulin 12S and albumin 2S. The VPS29-VPS26-VPS35 subcomplex may be involved in recycling of specific cargos from endosome to the plasma membrane. In Arabidopsis thaliana (Mouse-ear cress), this protein is Vacuolar protein sorting-associated protein 29.